The primary structure comprises 115 residues: MLVAVMIVMVIGNLLAQTAAQKIPFKECYPACLVECKAGSKFPKYLKCPFTCTKECLQQPSPPSVSSNNIDESDYFCKLGCATYHCVSLSSIQNPNVERVSACVDSCSNKCTKKN.

Residues Met1–Ala20 form the signal peptide.

The protein belongs to the plant thionin (TC 1.C.44) family. Post-translationally, is disulfide-linked.

Its subcellular location is the secreted. Its function is as follows. May be involved in plant defense. This is Thionin-like protein 2 from Arabidopsis thaliana (Mouse-ear cress).